The chain runs to 118 residues: Small ribosomal subunit protein uS13 (118 aa).

Positions 92–118 (RRNLPVRGQNTKNNARTRKGPTRPLKR) are disordered. The span at 106–118 (ARTRKGPTRPLKR) shows a compositional bias: basic residues.

It belongs to the universal ribosomal protein uS13 family. In terms of assembly, part of the 30S ribosomal subunit. Forms a loose heterodimer with protein S19. Forms two bridges to the 50S subunit in the 70S ribosome.

In terms of biological role, located at the top of the head of the 30S subunit, it contacts several helices of the 16S rRNA. In the 70S ribosome it contacts the 23S rRNA (bridge B1a) and protein L5 of the 50S subunit (bridge B1b), connecting the 2 subunits; these bridges are implicated in subunit movement. Contacts the tRNAs in the A and P-sites. The chain is Small ribosomal subunit protein uS13 from Psychrobacter arcticus (strain DSM 17307 / VKM B-2377 / 273-4).